The sequence spans 150 residues: Cytochrome c oxidase subunit 5A, mitochondrial (150 aa).

The transit peptide at 1–41 (MLGAALRRCAVAATSRAGPRGLLHSAPNPGPAAAIQSVRCY) directs the protein to the mitochondrion. The SIFI-degron motif lies at 2–17 (LGAALRRCAVAATSRA). Lysine 87 and lysine 113 each carry N6-acetyllysine. At threonine 141 the chain carries Phosphothreonine.

Belongs to the cytochrome c oxidase subunit 5A family. Component of the cytochrome c oxidase (complex IV, CIV), a multisubunit enzyme composed of 14 subunits. The complex is composed of a catalytic core of 3 subunits MT-CO1, MT-CO2 and MT-CO3, encoded in the mitochondrial DNA, and 11 supernumerary subunits COX4I, COX5A, COX5B, COX6A, COX6B, COX6C, COX7A, COX7B, COX7C, COX8 and NDUFA4, which are encoded in the nuclear genome. The complex exists as a monomer or a dimer and forms supercomplexes (SCs) in the inner mitochondrial membrane with NADH-ubiquinone oxidoreductase (complex I, CI) and ubiquinol-cytochrome c oxidoreductase (cytochrome b-c1 complex, complex III, CIII), resulting in different assemblies (supercomplex SCI(1)III(2)IV(1) and megacomplex MCI(2)III(2)IV(2)). Interacts with AFG1L. Interacts with RAB5IF. In terms of processing, in response to mitochondrial stress, the precursor protein is ubiquitinated by the SIFI complex in the cytoplasm before mitochondrial import, leading to its degradation. Within the SIFI complex, UBR4 initiates ubiquitin chain that are further elongated or branched by KCMF1.

It is found in the mitochondrion inner membrane. Its pathway is energy metabolism; oxidative phosphorylation. In terms of biological role, component of the cytochrome c oxidase, the last enzyme in the mitochondrial electron transport chain which drives oxidative phosphorylation. The respiratory chain contains 3 multisubunit complexes succinate dehydrogenase (complex II, CII), ubiquinol-cytochrome c oxidoreductase (cytochrome b-c1 complex, complex III, CIII) and cytochrome c oxidase (complex IV, CIV), that cooperate to transfer electrons derived from NADH and succinate to molecular oxygen, creating an electrochemical gradient over the inner membrane that drives transmembrane transport and the ATP synthase. Cytochrome c oxidase is the component of the respiratory chain that catalyzes the reduction of oxygen to water. Electrons originating from reduced cytochrome c in the intermembrane space (IMS) are transferred via the dinuclear copper A center (CU(A)) of subunit 2 and heme A of subunit 1 to the active site in subunit 1, a binuclear center (BNC) formed by heme A3 and copper B (CU(B)). The BNC reduces molecular oxygen to 2 water molecules using 4 electrons from cytochrome c in the IMS and 4 protons from the mitochondrial matrix. In Saguinus labiatus (Red-chested mustached tamarin), this protein is Cytochrome c oxidase subunit 5A, mitochondrial (COX5A).